Reading from the N-terminus, the 62-residue chain is Large ribosomal subunit protein uL30 (62 aa).

It belongs to the universal ribosomal protein uL30 family. Part of the 50S ribosomal subunit.

The polypeptide is Large ribosomal subunit protein uL30 (Thioalkalivibrio sulfidiphilus (strain HL-EbGR7)).